We begin with the raw amino-acid sequence, 301 residues long: Syntaxin-17 (301 aa).

Serine 2 carries the post-translational modification N-acetylserine. The Cytoplasmic segment spans residues 2 to 227 (SEDEEKVKLR…KNLQKAAKYK (226 aa)). Lysine 41 bears the N6-acetyllysine mark. A coiled-coil region spans residues 49-128 (DKLHEEHINA…QVKNEEALLQ (80 aa)). Tyrosine 156 carries the phosphotyrosine; by ABL1 modification. One can recognise a t-SNARE coiled-coil homology domain in the interval 161–223 (IPRDQNAAES…EEGTKNLQKA (63 aa)). Residues 228 to 248 (LAALPVAGAVIGGVVGGPIGL) form a helical membrane-spanning segment. Residues 228 to 274 (LAALPVAGAVIGGVVGGPIGLLAGFKVAGIAAALGGGVLGFTGGKLI) form a necessary and sufficient for localization to autophagosome region. The Lumenal segment spans residues 249-253 (LAGFK). Residues 254 to 274 (VAGIAAALGGGVLGFTGGKLI) traverse the membrane as a helical segment. Positions 273-301 (LIQRRKQKMMEKLTSSCPDLPSQSDKKCS) are required for interaction with COPB1, TMED9 and TMED10. Residues 275–301 (QRRKQKMMEKLTSSCPDLPSQSDKKCS) are Cytoplasmic-facing. At serine 288 the chain carries Phosphoserine. The Endoplasmic reticulum retention signal motif lies at 298–301 (KKCS).

The protein belongs to the syntaxin family. As to quaternary structure, forms a SNARE complex composed of VAMP8, SNAP29 and STX17 involved in fusion of autophagosome with lysosome. May interact with VAMP7. May interact with VTI1B. Probably interacts with BET1, SCFD1 and SEC22B. Interacts with PTPN2 and ABL1; involved in STX17 phosphorylation. Interacts with COPB1. Interacts with TMED9 and TMED10; the interaction is direct. Interacts with RUBCNL/PACER; promoting targeting of RUBCNL/PACER to autophagosome. Interacts with VAMP8, SNAP29, VPS39 and VPS41; these interactions are increased in the absence of TMEM39A. Interacts with IRGM; promoting STX17 recruitment to autophagosomes. Interacts with ATG8 proteins GABARAP and MAP1LC3B. Interacts with RNF115; this interaction enhances STX17 stability which in turn promotes autophagosome maturation. Interacts with RAB39A (GTP-bound); the interaction promotes autophagosome-lysosome membrane fusion driven by STX17-SNAP29-VAMP8. Interacts with RAB39B; the interaction may promote a different fonction in autophagy as compared with RAB39A. Phosphorylated at Tyr-156 probably by ABL1. Dephosphorylation by PTPN2; regulates exit from the endoplasmic reticulum. As to expression, detected in all tissues examined with higher expression in steroidogenic tissues including testis and adrenal gland (at protein level). Highly expressed in liver and testis. Also found in brain, heart, kidney, lung, placenta, skeletal muscle and spleen.

Its subcellular location is the endoplasmic reticulum membrane. It is found in the smooth endoplasmic reticulum membrane. It localises to the endoplasmic reticulum-Golgi intermediate compartment membrane. The protein resides in the cytoplasmic vesicle. The protein localises to the autophagosome membrane. Its subcellular location is the COPII-coated vesicle membrane. It is found in the cytoplasm. It localises to the cytosol. The protein resides in the mitochondrion membrane. The protein localises to the autolysosome membrane. In terms of biological role, SNAREs, soluble N-ethylmaleimide-sensitive factor-attachment protein receptors, are essential proteins for fusion of cellular membranes. SNAREs localized on opposing membranes assemble to form a trans-SNARE complex, an extended, parallel four alpha-helical bundle that drives membrane fusion. STX17 is a SNARE of the autophagosome involved in autophagy through the direct control of autophagosome membrane fusion with the lysosome membrane. May also play a role in the early secretory pathway where it may maintain the architecture of the endoplasmic reticulum-Golgi intermediate compartment/ERGIC and Golgi and/or regulate transport between the endoplasmic reticulum, the ERGIC and the Golgi. The chain is Syntaxin-17 from Rattus norvegicus (Rat).